The chain runs to 178 residues: Large ribosomal subunit protein uL5 (178 aa).

This sequence belongs to the universal ribosomal protein uL5 family. Part of the 50S ribosomal subunit; part of the 5S rRNA/L5/L18/L25 subcomplex. Contacts the 5S rRNA and the P site tRNA. Forms a bridge to the 30S subunit in the 70S ribosome.

This is one of the proteins that bind and probably mediate the attachment of the 5S RNA into the large ribosomal subunit, where it forms part of the central protuberance. In the 70S ribosome it contacts protein S13 of the 30S subunit (bridge B1b), connecting the 2 subunits; this bridge is implicated in subunit movement. Contacts the P site tRNA; the 5S rRNA and some of its associated proteins might help stabilize positioning of ribosome-bound tRNAs. The sequence is that of Large ribosomal subunit protein uL5 from Psychrobacter arcticus (strain DSM 17307 / VKM B-2377 / 273-4).